Reading from the N-terminus, the 433-residue chain is MFVDQVKIYVKGGDGGNGMVAFRREKYVPKGGPAGGDGGKGGDVVFVVDEGLRTLMDFRYQRHFKAPRGENGMSKNQHGKNAEDLLVKVPPGTVVIDADTNEVLADLTEQGQRFVVAKGGRGGRGNTRFATAANPAPEIAENGEPGEERNVILELKLLADVGLVGFPSVGKSTLLSVVSAARPKIAEYHFTTLVPNLGVVETEDGRSFVMADLPGLIEGAHEGVGLGHQFLRHIERTRVIVHVIDMAAVEGRDPYDDYVVINEELKQYNLRLTERPQIVAANKMDMPNAEENLRRFKEKVGEAVPVFPISAATRQGVRELLFAIADLLETTPEFPLHELEEPAVQRVVYKYEKEELPFTITRGSDGAFILSGEKIEKLFKMTDFSREESVRRFARQLRAMGVDDALRERGAKDGDTVRLLDYEFEFVDDWDER.

Residues 1–158 enclose the Obg domain; sequence MFVDQVKIYV…RNVILELKLL (158 aa). The 171-residue stretch at 159–329 folds into the OBG-type G domain; that stretch reads ADVGLVGFPS…LLFAIADLLE (171 aa). Residues 165-172, 190-194, 212-215, 282-285, and 310-312 contribute to the GTP site; these read GFPSVGKS, FTTLV, DLPG, NKMD, and SAA. Mg(2+) is bound by residues serine 172 and threonine 192. An OCT domain is found at 350–428; it reads KYEKEELPFT…LLDYEFEFVD (79 aa).

Belongs to the TRAFAC class OBG-HflX-like GTPase superfamily. OBG GTPase family. As to quaternary structure, monomer. It depends on Mg(2+) as a cofactor.

It localises to the cytoplasm. Its function is as follows. An essential GTPase which binds GTP, GDP and possibly (p)ppGpp with moderate affinity, with high nucleotide exchange rates and a fairly low GTP hydrolysis rate. Plays a role in control of the cell cycle, stress response, ribosome biogenesis and in those bacteria that undergo differentiation, in morphogenesis control. This Geobacillus thermodenitrificans (strain NG80-2) protein is GTPase Obg.